Consider the following 255-residue polypeptide: 3-deoxy-manno-octulosonate cytidylyltransferase (255 aa).

Belongs to the KdsB family.

It localises to the cytoplasm. It catalyses the reaction 3-deoxy-alpha-D-manno-oct-2-ulosonate + CTP = CMP-3-deoxy-beta-D-manno-octulosonate + diphosphate. It participates in nucleotide-sugar biosynthesis; CMP-3-deoxy-D-manno-octulosonate biosynthesis; CMP-3-deoxy-D-manno-octulosonate from 3-deoxy-D-manno-octulosonate and CTP: step 1/1. The protein operates within bacterial outer membrane biogenesis; lipopolysaccharide biosynthesis. Functionally, activates KDO (a required 8-carbon sugar) for incorporation into bacterial lipopolysaccharide in Gram-negative bacteria. The chain is 3-deoxy-manno-octulosonate cytidylyltransferase from Xanthobacter autotrophicus (strain ATCC BAA-1158 / Py2).